The following is a 496-amino-acid chain: MAGTGLFAEILDGEVYKYYADGEWKTSSSGKSVAIMNPATRKTQYKVQACTQEEVNAVMELAKSAQKSWAKTPLWKRAELLHKAAAILKDNKAPMAESLVKEIAKPAKDSVTEVVRSGDLISYCAEEGVRILGEGKFLLSDSFPGNDRTKYCLTSKIPLGVVLAIPPFNYPVNLAVSKIAPALIAGNSLVLKPPTQGAVSCLHMVHCFHLAGFPKGLISCITGKGSEIGDFLTMHPAVNCISFTGGDTGISISKKAGMIPLQMELGGKDACIVLDDADLDLVASNIIKGGFSYSGQRCTAVKVVLVMESVADELVEKVKAKVAKLTVGPPEENSDITAVVSESSANFIEGLVMDAKEKGATFCQEYKREGNLIWPLLLDNVRPDMRIAWEEPFGPVVPVLRINSVEEGINHCNASNFGLQGCVFTKDINKAILISDAMETGTVQINSAPARGPDHFPFQGLKDSGIGSQGVTNSINLMTKVKTTVINLPTPSYSMG.

Ala2 is modified (N-acetylalanine). Thr4 is subject to Phosphothreonine. Substrate contacts are provided by residues Arg116 and 169–170 (NY). The NADP(+) site is built by Lys192, Thr195, and Asp230. 245 to 249 (GGDTG) provides a ligand contact to NAD(+). The Proton acceptor role is filled by Glu264. 297–299 (RCT) lines the substrate pocket. The Nucleophile role is filled by Cys298. Glu391 contributes to the NADP(+) binding site. Position 451 (Arg451) interacts with substrate.

It belongs to the aldehyde dehydrogenase family.

It localises to the cytoplasm. The catalysed reaction is D-glyceraldehyde 3-phosphate + NADP(+) + H2O = (2R)-3-phosphoglycerate + NADPH + 2 H(+). Its function is as follows. Important as a means of generating NADPH for biosynthetic reactions. In Arabidopsis thaliana (Mouse-ear cress), this protein is NADP-dependent glyceraldehyde-3-phosphate dehydrogenase (ALDH11A3).